The primary structure comprises 91 residues: Small ribosomal subunit protein uS19 (91 aa).

This sequence belongs to the universal ribosomal protein uS19 family.

Its function is as follows. Protein S19 forms a complex with S13 that binds strongly to the 16S ribosomal RNA. This chain is Small ribosomal subunit protein uS19, found in Azotobacter vinelandii (strain DJ / ATCC BAA-1303).